The chain runs to 86 residues: Hepcidin-1 (86 aa).

The signal sequence occupies residues 1–22; sequence MKAFSVAVVLVIACMFILESTA. Residues 23–59 constitute a propeptide that is removed on maturation; sequence VPFSEVRTEEVGSFDSPVGEHQQPGGESMHLPEPFRF. Intrachain disulfides connect C68–C84, C71–C74, C72–C80, and C75–C83.

Belongs to the hepcidin family.

It is found in the secreted. Seems to act as a signaling molecule involved in the maintenance of iron homeostasis. Seems to be required in conjunction with HFE to regulate both intestinal iron absorption and iron storage in macrophages. May also have antimicrobial activity. The protein is Hepcidin-1 (hamp1) of Salmo salar (Atlantic salmon).